Consider the following 1836-residue polypeptide: U3 small nucleolar RNA-associated protein 10 (1836 aa).

The HEAT 1 repeat unit spans residues glutamate 245–isoleucine 283. Residues serine 453 to asparagine 473 form a disordered region. Acidic residues predominate over residues aspartate 461–asparagine 473. HEAT repeat units follow at residues proline 585 to serine 623 and valine 813 to leucine 850. The tract at residues glutamine 863–alanine 883 is disordered. Helical transmembrane passes span leucine 998–methionine 1018 and leucine 1085–leucine 1105. HEAT repeat units lie at residues glutamate 1333–alanine 1372, glutamate 1749–glutamate 1787, and leucine 1790–glycine 1828.

The protein belongs to the HEATR1/UTP10 family. As to quaternary structure, component of the ribosomal small subunit (SSU) processome.

It localises to the nucleus. The protein resides in the nucleolus. The protein localises to the membrane. Its function is as follows. Involved in nucleolar processing of pre-18S ribosomal RNA. Involved in ribosome biosynthesis. The chain is U3 small nucleolar RNA-associated protein 10 from Scheffersomyces stipitis (strain ATCC 58785 / CBS 6054 / NBRC 10063 / NRRL Y-11545) (Yeast).